A 92-amino-acid chain; its full sequence is Small ribosomal subunit protein uS19c (92 aa).

Belongs to the universal ribosomal protein uS19 family.

The protein localises to the plastid. The protein resides in the chloroplast. Protein S19 forms a complex with S13 that binds strongly to the 16S ribosomal RNA. The polypeptide is Small ribosomal subunit protein uS19c (Psilotum nudum (Whisk fern)).